We begin with the raw amino-acid sequence, 192 residues long: Adenylate kinase (192 aa).

10–18 (GVPGVGSTT) contacts ATP.

Belongs to the archaeal adenylate kinase family. In terms of assembly, monomer.

The protein resides in the cytoplasm. It carries out the reaction AMP + ATP = 2 ADP. The chain is Adenylate kinase from Methanococcus vannielii (strain ATCC 35089 / DSM 1224 / JCM 13029 / OCM 148 / SB).